The sequence spans 262 residues: Small ribosomal subunit protein eS4 (262 aa).

The region spanning 42–104 (LPLILILRNR…TNEDFRLLYD (63 aa)) is the S4 RNA-binding domain.

Belongs to the eukaryotic ribosomal protein eS4 family.

It localises to the cytoplasm. The polypeptide is Small ribosomal subunit protein eS4 (RPS4) (Gossypium hirsutum (Upland cotton)).